Consider the following 237-residue polypeptide: Protein PetR (237 aa).

A Response regulatory domain is found at 8–121 (HLLIVDDDER…ELLLRINAIL (114 aa)). The residue at position 57 (D57) is a 4-aspartylphosphate. The H-T-H motif DNA-binding region spans 77-95 (ATPILLLTARGETRERIEG). The ompR/PhoB-type DNA-binding region spans 132–236 (PKYLSLGPLR…VRGLGYMLAP (105 aa)).

Necessary for photosynthetic and respiratory growth. Probable promoter-specific protein mediating the interaction between DNA and RNA polymerase. The protein is Protein PetR (petR) of Rhodobacter capsulatus (strain ATCC BAA-309 / NBRC 16581 / SB1003).